The sequence spans 302 residues: L-threonate dehydrogenase (302 aa).

Residues 7–35 (FHVG…TWGA) and Thr-102 contribute to the NAD(+) site. Lys-178 is a catalytic residue. Lys-246 serves as a coordination point for NAD(+).

The protein belongs to the HIBADH-related family. L-threonate dehydrogenase subfamily.

It carries out the reaction L-threonate + NAD(+) = 2-dehydro-L-erythronate + NADH + H(+). In terms of biological role, catalyzes oxidation of L-threonate to 2-oxo-tetronate. Can use either NAD(+) or NADP(+) as cosubstrate, with a preference for NAD(+). The chain is L-threonate dehydrogenase from Escherichia coli (strain K12).